The sequence spans 464 residues: Anthocyanidin 3-O-galactosyltransferase 3GT1 (464 aa).

Positions 19 and 21 each coordinate an anthocyanidin. The Proton acceptor role is filled by H21. N38 carries an N-linked (GlcNAc...) asparagine glycan. D121 serves as the catalytic Charge relay. H152 is a binding site for an anthocyanidin. Residues A342, Q344, H359, W362, N363, S364, and E367 each coordinate UDP-alpha-D-glucose. G382 contacts an anthocyanidin. D383 is a UDP-alpha-D-glucose binding site.

The protein belongs to the UDP-glycosyltransferase family. As to quaternary structure, monomer. Mostly expressed in leaves and flowers and, to a lower extent, in roots. In flowers, mainly observed in petals, toruses and scapes, and at lower levels in pistils and stamens.

It carries out the reaction cyanidin + UDP-alpha-D-galactose = cyanidin 3-O-beta-D-galactoside + UDP + H(+). It catalyses the reaction cyanidin + UDP-alpha-D-glucose = cyanidin 3-O-beta-D-glucoside + UDP + H(+). The catalysed reaction is delphinidin + UDP-alpha-D-glucose = delphinidin 3-O-beta-D-glucoside + UDP. The enzyme catalyses malvidin + UDP-alpha-D-glucose = malvidin 3-O-beta-D-glucoside + UDP. It carries out the reaction delphinidin + UDP-alpha-D-galactose = delphinidin 3-O-beta-D-galactoside + UDP + H(+). It catalyses the reaction pelargonidin + UDP-alpha-D-galactose = pelargonidin 3-O-beta-D-galactoside betaine + UDP. The catalysed reaction is peonidin + UDP-alpha-D-galactose = peonidin 3-O-beta-D-galactoside + UDP. The enzyme catalyses malvidin + UDP-alpha-D-galactose = malvidin 3-O-beta-D-galactoside + UDP + H(+). It carries out the reaction petunidin + UDP-alpha-D-galactose = petunidin 3-O-beta-D-galactoside + UDP. It catalyses the reaction an anthocyanidin + UDP-alpha-D-glucose + H(+) = an anthocyanidin 3-O-beta-D-glucoside + UDP. The catalysed reaction is an anthocyanidin + UDP-alpha-D-galactose = an anthocyanidin 3-O-beta-D-galactoside + UDP. The protein operates within pigment biosynthesis; anthocyanin biosynthesis. Its function is as follows. Flavonoid 3-O-glycosyltransferase involved in the biosynthesis of anthocyanins conferring flower red/pink colors, mainly anthocyanidin 3-O-glycosides. Catalyzes the addition of UDP-sugar to the 3-OH of anthocyanidin, with a preference for UDP-galactose (UDP-Gal) as sugar donor and cyanidin as substrate; able to use delphinidin, pelargonidin, peonidin, malvidin and petunidin as substrates in the presence of UDP-Gal. Can also use UDP-glucose (UDP-Glu) as sugar donor with delphinidin, cyanidin and malvidin as substrates, but not active on pelargonidin, peonidin and petunidin. This is Anthocyanidin 3-O-galactosyltransferase 3GT1 from Rhododendron delavayi (Rhododendron).